We begin with the raw amino-acid sequence, 262 residues long: Global transcriptional regulator CodY (262 aa).

The tract at residues 1-159 is GAF domain; it reads MAHLLEKTRK…ASTVVGIQLL (159 aa). A DNA-binding region (H-T-H motif) is located at residues 207–226; sequence ASVIADRIGITRSVIVNALR.

It belongs to the CodY family.

It is found in the cytoplasm. Functionally, DNA-binding global transcriptional regulator which is involved in the adaptive response to starvation and acts by directly or indirectly controlling the expression of numerous genes in response to nutrient availability. During rapid exponential growth, CodY is highly active and represses genes whose products allow adaptation to nutrient depletion. The chain is Global transcriptional regulator CodY from Streptococcus pneumoniae serotype 4 (strain ATCC BAA-334 / TIGR4).